An 80-amino-acid polypeptide reads, in one-letter code: Large ribosomal subunit protein uL24 (80 aa).

The tract at residues 53–80 (HMRPTQSNPQGSIIEREFPIHASNVKKS) is disordered.

It belongs to the universal ribosomal protein uL24 family. Part of the 50S ribosomal subunit.

One of two assembly initiator proteins, it binds directly to the 5'-end of the 23S rRNA, where it nucleates assembly of the 50S subunit. Its function is as follows. One of the proteins that surrounds the polypeptide exit tunnel on the outside of the subunit. The chain is Large ribosomal subunit protein uL24 from Chlorobium luteolum (strain DSM 273 / BCRC 81028 / 2530) (Pelodictyon luteolum).